The chain runs to 611 residues: Leukotriene A-4 hydrolase (611 aa).

The residue at position 73 (Lys-73) is an N6-acetyllysine. A peptide contacts are provided by residues 135–137 (QCQ) and 267–272 (PYGGME). His-296 serves as a coordination point for Zn(2+). Catalysis depends on Glu-297, which acts as the Proton acceptor. His-300 and Glu-319 together coordinate Zn(2+). Position 337 is an N6-acetyllysine (Lys-337). Tyr-384 (proton donor) is an active-site residue. Lys-414 is subject to N6-acetyllysine. Ser-416 carries the post-translational modification Phosphoserine. 564–566 (RMK) contacts a peptide. Lys-573 is modified (N6-acetyllysine).

The protein belongs to the peptidase M1 family. In terms of assembly, monomer. Zn(2+) is required as a cofactor. Phosphorylation at Ser-416 inhibits leukotriene-A4 hydrolase activity. Isoform 1 and isoform 2 are expressed in monocytes, lymphocytes, neutrophils, reticulocytes, platelets and fibroblasts.

The protein resides in the cytoplasm. The enzyme catalyses leukotriene A4 + H2O = leukotriene B4. It catalyses the reaction (5S,6S)-epoxy-(18R)-hydroxy-(7E,9E,11Z,14Z,16E)-eicosapentaenoate + H2O = resolvin E1. The catalysed reaction is (5S,6S)-epoxy-(18S)-hydroxy-(7E,9E,11Z,14Z,16E)-eicosapentaenoate + H2O = 18S-resolvin E1. It carries out the reaction Release of the N-terminal residue from a tripeptide.. It functions in the pathway lipid metabolism; leukotriene B4 biosynthesis. Inhibited by bestatin. The epoxide hydrolase activity is restrained by suicide inactivation that involves binding of LTA4 to Tyr-379. 4-(4-benzylphenyl)thiazol-2-amine (ARM1) selectively inhibits the epoxide hydrolase activity. Bifunctional zinc metalloenzyme that comprises both epoxide hydrolase (EH) and aminopeptidase activities. Acts as an epoxide hydrolase to catalyze the conversion of LTA4 to the pro-inflammatory mediator leukotriene B4 (LTB4). Also has aminopeptidase activity, with high affinity for N-terminal arginines of various synthetic tripeptides. In addition to its pro-inflammatory EH activity, may also counteract inflammation by its aminopeptidase activity, which inactivates by cleavage another neutrophil attractant, the tripeptide Pro-Gly-Pro (PGP), a bioactive fragment of collagen generated by the action of matrix metalloproteinase-9 (MMP9) and prolylendopeptidase (PREPL). Involved also in the biosynthesis of resolvin E1 and 18S-resolvin E1 from eicosapentaenoic acid, two lipid mediators that show potent anti-inflammatory and pro-resolving actions. The chain is Leukotriene A-4 hydrolase (LTA4H) from Homo sapiens (Human).